We begin with the raw amino-acid sequence, 134 residues long: MRVKRWLLAGIALCLLTGMRDPFKPPEDLCRISELSQWRYQGMVGRGERIIGVIKDGQKKWRRVQQNDVLENGWTILQLTPDVLTLGTGTNCEPPQWLWQRQGDTNEAMDSRTTVDADTRRTGGKAAKSDADGG.

The segment at 95–134 is disordered; that stretch reads PQWLWQRQGDTNEAMDSRTTVDADTRRTGGKAAKSDADGG. Residues 109–134 show a composition bias toward basic and acidic residues; the sequence is MDSRTTVDADTRRTGGKAAKSDADGG.

In terms of biological role, required for the use of extracellular DNA as a nutrient. The polypeptide is DNA utilization protein HofP (hofP) (Escherichia coli (strain K12)).